The following is a 468-amino-acid chain: Abscisic acid 8'-hydroxylase 4 (468 aa).

The helical transmembrane segment at 4–24 threads the bilayer; that stretch reads IWFLVVPILILCLLLVRVIVS. Cys415 is a heme binding site.

The protein belongs to the cytochrome P450 family. It depends on heme as a cofactor. As to expression, mainly expressed in flowers. Lower expression in siliques, rosette leaves, roots and stems. Not expressed in dry seeds. Expressed in silique envelopes, but not in embryo or endosperm during the seed development.

The protein localises to the membrane. It carries out the reaction 2-cis-(+)-abscisate + reduced [NADPH--hemoprotein reductase] + O2 = (+)-8'-hydroxyabscisate + oxidized [NADPH--hemoprotein reductase] + H2O + H(+). It participates in plant hormone degradation; abscisic acid degradation. In terms of biological role, involved in the oxidative degradation of abscisic acid, but not in the isomerization of the produced 8'-hydroxyabscisic acid (8'-OH-ABA) to (-)-phaseic acid (PA). In Arabidopsis thaliana (Mouse-ear cress), this protein is Abscisic acid 8'-hydroxylase 4 (CYP707A4).